We begin with the raw amino-acid sequence, 286 residues long: Probable biotin transporter (286 aa).

2 EamA domains span residues 3–128 and 139–277; these read YLLF…AIIR and GFLL…LWVN. Transmembrane regions (helical) follow at residues 4-24, 26-46, 56-76, 81-101, 109-129, 136-156, 174-194, 203-223, 234-254, and 258-280; these read LLFVTVLWAFSFNLIGEYLAG, VDSYFAVLTRVLLAGLVFLPL, FVGGVMLVGALQFGITYVCLY, VLTVPEVLLFTVLTPVHVALF, FNFWALAAALVAVLGAAIIRY, FLQGFLLLQLANATFAAGQVL, FGYFFVGALLVALPAWLLFGD, LQWGVLVWMGLLATALGQFWW, TLAVMNNLHVPVGLLLNLLIW, and ADLPRLALGGAVIVASLWVNRLG.

Belongs to the drug/metabolite transporter (DMT) superfamily. 10 TMS drug/metabolite exporter (DME) (TC 2.A.7.3) family.

It is found in the cell inner membrane. The enzyme catalyses biotin(in) = biotin(out). In terms of biological role, uptake of biotin. This is Probable biotin transporter from Pseudomonas aeruginosa (strain ATCC 15692 / DSM 22644 / CIP 104116 / JCM 14847 / LMG 12228 / 1C / PRS 101 / PAO1).